Consider the following 138-residue polypeptide: Acidic phospholipase A2 Cvv-E6h (138 aa).

Positions 1–16 (MRTLWIVAVLLLGVEG) are cleaved as a signal peptide. 7 disulfides stabilise this stretch: C42–C131, C44–C60, C59–C111, C65–C138, C66–C104, C73–C97, and C91–C102. Residues Y43, G45, and G47 each coordinate Ca(2+). Residue H63 is part of the active site. Residue D64 participates in Ca(2+) binding. D105 is a catalytic residue.

It belongs to the phospholipase A2 family. Group II subfamily. D49 sub-subfamily. The cofactor is Ca(2+). In terms of tissue distribution, expressed by the venom gland.

It is found in the secreted. The enzyme catalyses a 1,2-diacyl-sn-glycero-3-phosphocholine + H2O = a 1-acyl-sn-glycero-3-phosphocholine + a fatty acid + H(+). In terms of biological role, snake venom phospholipase A2 (PLA2) that shows very low inhibition of ADP-induced platelet aggregation in platelet-rich plasma of human, rabbit and guinea pig. In vivo, shows efficient edema-inducing activities in rat paws. PLA2 catalyzes the calcium-dependent hydrolysis of the 2-acyl groups in 3-sn-phosphoglycerides. This Crotalus viridis viridis (Prairie rattlesnake) protein is Acidic phospholipase A2 Cvv-E6h.